A 578-amino-acid chain; its full sequence is MVFAAPCWVPPLPSDLPDSTTLEEFIFCQVKDSQTRSELDRSILICGTQGKEYTVQESMERTGRLAQGLSAWLDWPQKPSEEDWKVAAIFNINCVEFFSISHAIHRLGGTVSAINASSTADELEAQLRLSNAQAIFTCNTLLKIAMKASQKVGIPLANIFLTDAPGSYRPDDVYPFQEIDNIVRTARSSLPLLQLGRGQGSSTPAYICFSSGTSGAQKPVLLSHQGIIANIVQINTFEKFRQKGPNVSLCILPLAHSYGLVCVAYNALYRGDRLAVLPSSDVEDLLSIVEKLRINTLYLVPTLLSRILSGGKAGGHDLSCVKEVYTGGAPLHPMLGEHILRHHPTWKTKQCYGATEAGTAVSVTSDCDLWPGSVGCLLPGVQAKIIRSDGSETTKHDESGELWVSSPSLAIGYLSNPLATEATFTVDNTGRTWLRTGDEAKICLSPNGNEHLFIVDRIKDIIKVKGFQVAPVELEQLLLSNDFVEEVAITSRQDKRGEERPQAFVVRTHEGLKEPQDAVSESLQALVKARKARYKWLHPHVIFVDSLPKTTSGKIMRRALRNMCPANSEVNGRLSSKI.

Residues 210–218 (SSGTSGAQK), 350–355 (QCYGAT), Asp438, Arg457, and Lys554 each bind ATP. The interval 281–350 (DVEDLLSIVE…RHHPTWKTKQ (70 aa)) is SBD1. The SBD2 stretch occupies residues 351-413 (CYGATEAGTA…VSSPSLAIGY (63 aa)). A Peroxisomal targeting signal type 1 motif is present at residues 576–578 (SKI).

It localises to the peroxisome. It participates in mycotoxin biosynthesis. Functionally, acyl-CoA ligase; part of the gene clusters that mediate the biosynthesis of the host-selective toxins (HSTs) AK-toxins responsible for Japanese pear black spot disease by the Japanese pear pathotype. AK-toxins are esters of 9,10-epoxy 8-hydroxy 9-methyldecatrienoic acid (EDA). On cellular level, AK-toxins affect plasma membrane of susceptible cells and cause a sudden increase in loss of K(+) after a few minutes of toxin treatment. The acyl-CoA ligase AKT1, the hydrolase AKT2 and enoyl-CoA hydratase AKT3 are all involved in the biosynthesis of the AK-, AF- and ACT-toxin common 9,10-epoxy-8-hydroxy-9-methyl-decatrienoic acid (EDA) structural moiety. Part of the EDA biosynthesis occurs in the peroxisome since these 3 enzymes are localized in peroxisomes. The exact roles of the 3 enzymes, as well as of additional AK-toxin clusters enzymes, including AKT4, AKT6 and AKTS1, have still to be elucidated. The Cytochrome P450 monooxygenase AKT7 on the other side functions to limit production of EDA and AK-toxin, probably via the catalysis of a side reaction of EDA or its precursor. The polypeptide is Acyl-CoA ligase AKT1 (Alternaria alternata (Alternaria rot fungus)).